We begin with the raw amino-acid sequence, 422 residues long: Glutamate-1-semialdehyde 2,1-aminomutase (422 aa).

At Lys264 the chain carries N6-(pyridoxal phosphate)lysine.

The protein belongs to the class-III pyridoxal-phosphate-dependent aminotransferase family. HemL subfamily. Homodimer. It depends on pyridoxal 5'-phosphate as a cofactor.

It localises to the cytoplasm. The catalysed reaction is (S)-4-amino-5-oxopentanoate = 5-aminolevulinate. It functions in the pathway porphyrin-containing compound metabolism; protoporphyrin-IX biosynthesis; 5-aminolevulinate from L-glutamyl-tRNA(Glu): step 2/2. This Clostridium kluyveri (strain ATCC 8527 / DSM 555 / NBRC 12016 / NCIMB 10680 / K1) protein is Glutamate-1-semialdehyde 2,1-aminomutase.